The sequence spans 252 residues: Triosephosphate isomerase (252 aa).

Substrate is bound at residue Asn10–Lys12. Residue His96 is the Electrophile of the active site. The active-site Proton acceptor is Glu168. Residues Gly174, Ser214, and Gly235–Gly236 contribute to the substrate site.

This sequence belongs to the triosephosphate isomerase family. In terms of assembly, homodimer.

It localises to the cytoplasm. The catalysed reaction is D-glyceraldehyde 3-phosphate = dihydroxyacetone phosphate. It participates in carbohydrate biosynthesis; gluconeogenesis. Its pathway is carbohydrate degradation; glycolysis; D-glyceraldehyde 3-phosphate from glycerone phosphate: step 1/1. Functionally, involved in the gluconeogenesis. Catalyzes stereospecifically the conversion of dihydroxyacetone phosphate (DHAP) to D-glyceraldehyde-3-phosphate (G3P). This Streptococcus gordonii (strain Challis / ATCC 35105 / BCRC 15272 / CH1 / DL1 / V288) protein is Triosephosphate isomerase.